The primary structure comprises 60 residues: Ferredoxin (60 aa).

4Fe-4S ferredoxin-type domains are found at residues 2-29 and 30-60; these read KVRV…LGDD and GKAK…SVEE. Residues cysteine 10, cysteine 13, and cysteine 16 each coordinate [4Fe-4S] cluster. Cysteine 20 and cysteine 43 are oxidised to a cystine. Residue cysteine 51 coordinates [4Fe-4S] cluster.

As to quaternary structure, monomer. It depends on [4Fe-4S] cluster as a cofactor.

Functionally, ferredoxins are iron-sulfur proteins that transfer electrons in a wide variety of metabolic reactions. The protein is Ferredoxin (fdx) of Thermotoga maritima (strain ATCC 43589 / DSM 3109 / JCM 10099 / NBRC 100826 / MSB8).